The following is a 129-amino-acid chain: MAKSVRSSKKKVKRVVPDAVAHIYSSFNNTIVTITDRQGNALSWATSGGSGFRGSRKSTPFAAQVAAERAADMALEYGVKNVDVLVKGPGSGRDSAIRALNAKNLKVTSITDVTPLPHNGCRPPKKRRV.

This sequence belongs to the universal ribosomal protein uS11 family. In terms of assembly, part of the 30S ribosomal subunit. Interacts with proteins S7 and S18. Binds to IF-3.

Functionally, located on the platform of the 30S subunit, it bridges several disparate RNA helices of the 16S rRNA. Forms part of the Shine-Dalgarno cleft in the 70S ribosome. The polypeptide is Small ribosomal subunit protein uS11 (Francisella tularensis subsp. holarctica (strain FTNF002-00 / FTA)).